We begin with the raw amino-acid sequence, 152 residues long: Plant UBX domain-containing protein 12 (152 aa).

A disordered region spans residues 32 to 61 (KRFSEEESEETENTTNSSNAVFGFPNLPEE). Positions 67-150 (DQSVLCRICV…GLANSLVSVT (84 aa)) constitute a UBX domain.

The chain is Plant UBX domain-containing protein 12 from Arabidopsis thaliana (Mouse-ear cress).